The primary structure comprises 211 residues: UPF0637 protein Bsph_1379 (211 aa).

It belongs to the UPF0637 family.

This chain is UPF0637 protein Bsph_1379, found in Lysinibacillus sphaericus (strain C3-41).